A 570-amino-acid polypeptide reads, in one-letter code: Periplasmic trehalase (570 aa).

Residues 1-34 form the signal peptide; it reads MIPPEIRRSVLLQKAIKLALAGTLLTFASFSATA. Residues Arg159, 166 to 167, Asn203, 212 to 214, 284 to 286, and Gly317 each bind substrate; these read WD, RSQ, and RPE. Catalysis depends on proton donor/acceptor residues Asp319 and Glu503. Glu518 serves as a coordination point for substrate. Positions 544-570 are disordered; it reads KPCDSVPSTRPASLSATPTKTPSAATQ. The segment covering 554–570 has biased composition (low complexity); that stretch reads PASLSATPTKTPSAATQ.

Belongs to the glycosyl hydrolase 37 family. As to quaternary structure, monomer.

The protein localises to the periplasm. It carries out the reaction alpha,alpha-trehalose + H2O = alpha-D-glucose + beta-D-glucose. Provides the cells with the ability to utilize trehalose at high osmolarity by splitting it into glucose molecules that can subsequently be taken up by the phosphotransferase-mediated uptake system. In Salmonella paratyphi A (strain AKU_12601), this protein is Periplasmic trehalase.